A 5255-amino-acid chain; its full sequence is SCO-spondin (5255 aa).

Residues Met-1 to Gly-18 form the signal peptide. One can recognise an EMI domain in the interval Arg-19–His-111. N-linked (GlcNAc...) asparagine glycans are attached at residues Asn-97, Asn-136, Asn-156, and Asn-255. Residues Ala-192–Ser-358 form the VWFD 1 domain. 2 disulfides stabilise this stretch: Cys-194–Cys-317 and Cys-216–Cys-357. In terms of domain architecture, TIL 1 spans Cys-453–Cys-508. The 94-residue stretch at Cys-508–Leu-601 folds into the VWFC 1 domain. The region spanning Ala-546 to Pro-717 is the VWFD 2 domain. 3 disulfides stabilise this stretch: Cys-548–Cys-681, Cys-570–Cys-716, and Cys-592–Cys-600. The N-linked (GlcNAc...) asparagine glycan is linked to Asn-801. A TIL 2 domain is found at Cys-809–Cys-868. In terms of domain architecture, VWFC 2 spans Cys-868–Asp-926. N-linked (GlcNAc...) asparagine glycans are attached at residues Asn-931 and Asn-972. A VWFD 3 domain is found at Gly-998 to Pro-1168. 3 cysteine pairs are disulfide-bonded: Cys-1000-Cys-1132, Cys-1022-Cys-1167, and Cys-1043-Cys-1050. The region spanning Cys-1263–Cys-1319 is the TIL 3 domain. N-linked (GlcNAc...) asparagine glycosylation is present at Asn-1340. LDL-receptor class A domains lie at His-1362–Ala-1398, His-1400–Pro-1436, Pro-1439–Ser-1477, Ser-1479–Val-1515, Val-1515–Pro-1551, and Thr-1555–Met-1593. Intrachain disulfides connect Cys-1363-Cys-1376, Cys-1370-Cys-1389, Cys-1383-Cys-1397, Cys-1401-Cys-1413, Cys-1408-Cys-1426, Cys-1420-Cys-1435, Cys-1440-Cys-1452, Cys-1447-Cys-1465, Cys-1459-Cys-1476, Cys-1480-Cys-1492, Cys-1487-Cys-1505, Cys-1499-Cys-1514, Cys-1516-Cys-1528, Cys-1523-Cys-1541, Cys-1535-Cys-1550, Cys-1556-Cys-1568, Cys-1563-Cys-1581, and Cys-1575-Cys-1592. N-linked (GlcNAc...) asparagine glycosylation occurs at Asn-1610. 3 LDL-receptor class A domains span residues Val-1616–Asn-1652, Ser-1654–Gly-1693, and Pro-1699–Glu-1734. Disulfide bonds link Cys-1617–Cys-1629, Cys-1624–Cys-1642, and Cys-1636–Cys-1651. The N-linked (GlcNAc...) asparagine glycan is linked to Asn-1652. 6 disulfide bridges follow: Cys-1655-Cys-1668, Cys-1662-Cys-1681, Cys-1675-Cys-1692, Cys-1700-Cys-1711, Cys-1706-Cys-1724, and Cys-1718-Cys-1733. Asn-1713 is a glycosylation site (N-linked (GlcNAc...) asparagine). Asn-1743 is a glycosylation site (N-linked (GlcNAc...) asparagine). The 43-residue stretch at Pro-1748–Gly-1790 folds into the LDL-receptor class A 10 domain. 6 cysteine pairs are disulfide-bonded: Cys-1749–Cys-1759, Cys-1754–Cys-1772, Cys-1766–Cys-1789, Cys-1801–Cys-1837, Cys-1805–Cys-1842, and Cys-1816–Cys-1827. 2 consecutive TSP type-1 domains span residues Cys-1789–Pro-1843 and Asp-1845–Pro-1903. Asn-1856 carries an N-linked (GlcNAc...) asparagine glycan. 3 disulfide bridges follow: Cys-1857/Cys-1897, Cys-1861/Cys-1902, and Cys-1871/Cys-1881. The region spanning Cys-1907–Cys-1961 is the TIL 4 domain. EGF-like domains follow at residues Cys-1919 to Val-1956 and Arg-1957 to Cys-1983. One can recognise a VWFC 3 domain in the interval Cys-1961–Gly-2019. The TSP type-1 3 domain occupies Ser-2002–Gln-2058. Intrachain disulfides connect Cys-2003–Cys-2042, Cys-2014–Cys-2018, and Cys-2052–Cys-2057. Residues Gln-2058–Ala-2120 form the VWFC 4 domain. Residues Asn-2125 and Asn-2230 are each glycosylated (N-linked (GlcNAc...) asparagine). Disulfide bonds link Cys-2162–Cys-2310, Cys-2328–Cys-2339, Cys-2335–Cys-2352, and Cys-2346–Cys-2361. The F5/8 type C domain maps to Cys-2162–Cys-2310. The region spanning Pro-2327–Glu-2362 is the LDL-receptor class A 11 domain. Residues Cys-2352 to Pro-2373 form a disordered region. The span at Pro-2364 to Pro-2373 shows a compositional bias: polar residues. LDL-receptor class A domains lie at Leu-2481–Gly-2517 and Thr-2538–Ala-2574. 12 disulfide bridges follow: Cys-2482–Cys-2494, Cys-2489–Cys-2507, Cys-2501–Cys-2516, Cys-2539–Cys-2551, Cys-2546–Cys-2564, Cys-2558–Cys-2573, Cys-2576–Cys-2612, Cys-2587–Cys-2591, Cys-2622–Cys-2627, Cys-2642–Cys-2679, Cys-2646–Cys-2684, and Cys-2657–Cys-2669. TSP type-1 domains follow at residues Asp-2575–Pro-2628 and Pro-2630–Gly-2685. In terms of domain architecture, TIL 5 spans Pro-2708–Cys-2750. The N-linked (GlcNAc...) asparagine glycan is linked to Asn-2746. 3 TSP type-1 domains span residues Ala-2790 to Ala-2844, Ser-2849 to Pro-2903, and Ala-2905 to Gly-2958. 9 disulfide bridges follow: Cys-2791-Cys-2829, Cys-2802-Cys-2806, Cys-2839-Cys-2843, Cys-2861-Cys-2897, Cys-2865-Cys-2902, Cys-2881-Cys-2887, Cys-2917-Cys-2952, Cys-2921-Cys-2957, and Cys-2932-Cys-2942. A TIL 6 domain is found at Glu-2971–Cys-3020. Residues Asn-3011, Asn-3042, and Asn-3065 are each glycosylated (N-linked (GlcNAc...) asparagine). Positions Cys-3020–Asp-3077 constitute a VWFC 5 domain. 2 TSP type-1 domains span residues Pro-3060–Arg-3115 and Val-3117–Pro-3158. Intrachain disulfides connect Cys-3061/Cys-3099, Cys-3072/Cys-3076, and Cys-3109/Cys-3114. N-linked (GlcNAc...) asparagine glycosylation occurs at Asn-3136. A TIL 7 domain is found at Cys-3165 to Cys-3217. Positions Cys-3217–Gly-3275 constitute a VWFC 6 domain. Residues Asn-3238 and Asn-3248 are each glycosylated (N-linked (GlcNAc...) asparagine). Residues Asp-3258–His-3309 form the TSP type-1 11 domain. 3 cysteine pairs are disulfide-bonded: Cys-3270–Cys-3303, Cys-3274–Cys-3308, and Cys-3285–Cys-3293. 3 N-linked (GlcNAc...) asparagine glycosylation sites follow: Asn-3350, Asn-3366, and Asn-3392. TSP type-1 domains lie at Pro-3410–Pro-3475 and Asp-3477–Pro-3532. Disulfide bonds link Cys-3422–Cys-3468, Cys-3426–Cys-3474, Cys-3437–Cys-3449, Cys-3489–Cys-3524, Cys-3492–Cys-3531, and Cys-3502–Cys-3514. The 56-residue stretch at Cys-3534–Cys-3589 folds into the TIL 8 domain. Residues Asn-3598 and Asn-3625 are each glycosylated (N-linked (GlcNAc...) asparagine). TSP type-1 domains follow at residues Asp-3644–Pro-3700 and Glu-3702–Arg-3751. Cystine bridges form between Cys-3656/Cys-3693, Cys-3660/Cys-3699, Cys-3671/Cys-3683, Cys-3714/Cys-3745, Cys-3718/Cys-3750, and Cys-3729/Cys-3735. Asn-3823 and Asn-3869 each carry an N-linked (GlcNAc...) asparagine glycan. TSP type-1 domains follow at residues Asp-3878–Pro-3934, Glu-3951–Ser-4004, Asn-4018–Lys-4074, and Asp-4076–Asp-4131. Disulfide bonds link Cys-3890–Cys-3928, Cys-3894–Cys-3933, Cys-3906–Cys-3918, Cys-3963–Cys-3998, Cys-3967–Cys-4003, and Cys-3982–Cys-3988. The disordered stretch occupies residues Glu-3932–Glu-3951. N-linked (GlcNAc...) asparagine glycosylation occurs at Asn-4018. Cystine bridges form between Cys-4019–Cys-4055, Cys-4030–Cys-4034, Cys-4068–Cys-4073, Cys-4088–Cys-4125, Cys-4092–Cys-4130, and Cys-4103–Cys-4115. The TIL 9 domain maps to Cys-4134–Cys-4189. Asn-4174 and Asn-4211 each carry an N-linked (GlcNAc...) asparagine glycan. TSP type-1 domains lie at Arg-4230–Pro-4282, Gly-4322–Pro-4384, and Glu-4386–Ser-4433. 3 disulfide bridges follow: Cys-4231–Cys-4266, Cys-4242–Cys-4246, and Cys-4276–Cys-4281. Asn-4362 carries an N-linked (GlcNAc...) asparagine glycan. 3 disulfide bridges follow: Cys-4387–Cys-4417, Cys-4398–Cys-4400, and Cys-4427–Cys-4432. N-linked (GlcNAc...) asparagine glycosylation is present at Asn-4428. The TIL 10 domain maps to Cys-4437–Cys-4492. N-linked (GlcNAc...) asparagine glycosylation occurs at Asn-4498. 2 TSP type-1 domains span residues Leu-4537 to Gln-4608 and Leu-4610 to Pro-4662. Cystine bridges form between Cys-4548–Cys-4601, Cys-4551–Cys-4607, Cys-4575–Cys-4591, Cys-4611–Cys-4646, Cys-4622–Cys-4626, and Cys-4656–Cys-4661. The 48-residue stretch at Thr-4675–Cys-4722 folds into the TIL 11 domain. N-linked (GlcNAc...) asparagine glycans are attached at residues Asn-4730, Asn-4747, and Asn-4752. TSP type-1 domains are found at residues Cys-4762–Pro-4815 and Gly-4817–Thr-4869. 6 cysteine pairs are disulfide-bonded: Cys-4774/Cys-4809, Cys-4778/Cys-4814, Cys-4789/Cys-4798, Cys-4818/Cys-4852, Cys-4829/Cys-4833, and Cys-4863/Cys-4868. Asn-4867 carries an N-linked (GlcNAc...) asparagine glycan. In terms of domain architecture, TIL 12 spans Cys-4872 to Cys-4926. N-linked (GlcNAc...) asparagine glycosylation is found at Asn-4939 and Asn-4970. A TSP type-1 27 domain is found at Asp-4979–Ala-5033. 3 disulfide bridges follow: Cys-4980-Cys-5017, Cys-4991-Cys-4995, and Cys-5027-Cys-5032. N-linked (GlcNAc...) asparagine glycosylation is found at Asn-5081, Asn-5122, and Asn-5169. A VWFC 7 domain is found at Cys-5092 to Arg-5150. Disulfide bonds link Cys-5161–Cys-5209, Cys-5175–Cys-5226, Cys-5185–Cys-5242, and Cys-5189–Cys-5244. The CTCK domain maps to Cys-5161–Gln-5248.

Belongs to the thrombospondin family.

Its subcellular location is the secreted. The protein localises to the extracellular space. In terms of biological role, involved in the modulation of neuronal aggregation. May be involved in developmental events during the formation of the central nervous system. This Gallus gallus (Chicken) protein is SCO-spondin (SSPO).